The chain runs to 288 residues: Acetyl-coenzyme A carboxylase carboxyl transferase subunit beta (288 aa).

In terms of domain architecture, CoA carboxyltransferase N-terminal spans 34 to 288 (LFAKCPACKH…HLVAFHGGGQ (255 aa)). Residues Cys-38, Cys-41, Cys-56, and Cys-59 each coordinate Zn(2+). The segment at 38 to 59 (CPACKHMIYKKDLGLAKICPTC) adopts a C4-type zinc-finger fold.

Belongs to the AccD/PCCB family. In terms of assembly, acetyl-CoA carboxylase is a heterohexamer composed of biotin carboxyl carrier protein (AccB), biotin carboxylase (AccC) and two subunits each of ACCase subunit alpha (AccA) and ACCase subunit beta (AccD). Requires Zn(2+) as cofactor.

The protein resides in the cytoplasm. It catalyses the reaction N(6)-carboxybiotinyl-L-lysyl-[protein] + acetyl-CoA = N(6)-biotinyl-L-lysyl-[protein] + malonyl-CoA. The protein operates within lipid metabolism; malonyl-CoA biosynthesis; malonyl-CoA from acetyl-CoA: step 1/1. In terms of biological role, component of the acetyl coenzyme A carboxylase (ACC) complex. Biotin carboxylase (BC) catalyzes the carboxylation of biotin on its carrier protein (BCCP) and then the CO(2) group is transferred by the transcarboxylase to acetyl-CoA to form malonyl-CoA. The polypeptide is Acetyl-coenzyme A carboxylase carboxyl transferase subunit beta (Streptococcus pyogenes serotype M4 (strain MGAS10750)).